The primary structure comprises 469 residues: 3-isopropylmalate dehydratase large subunit (469 aa).

[4Fe-4S] cluster-binding residues include Cys-350, Cys-410, and Cys-413.

Belongs to the aconitase/IPM isomerase family. LeuC type 1 subfamily. In terms of assembly, heterodimer of LeuC and LeuD. Requires [4Fe-4S] cluster as cofactor.

The enzyme catalyses (2R,3S)-3-isopropylmalate = (2S)-2-isopropylmalate. It participates in amino-acid biosynthesis; L-leucine biosynthesis; L-leucine from 3-methyl-2-oxobutanoate: step 2/4. Catalyzes the isomerization between 2-isopropylmalate and 3-isopropylmalate, via the formation of 2-isopropylmaleate. This chain is 3-isopropylmalate dehydratase large subunit, found in Allorhizobium ampelinum (strain ATCC BAA-846 / DSM 112012 / S4) (Agrobacterium vitis (strain S4)).